The following is a 434-amino-acid chain: Glutamyl-tRNA reductase (434 aa).

Residues 49–52 (TCNR), Ser109, 114–116 (EPQ), and Gln120 contribute to the substrate site. The active-site Nucleophile is the Cys50. Residue 189-194 (GAGEMC) coordinates NADP(+).

The protein belongs to the glutamyl-tRNA reductase family. Homodimer.

The catalysed reaction is (S)-4-amino-5-oxopentanoate + tRNA(Glu) + NADP(+) = L-glutamyl-tRNA(Glu) + NADPH + H(+). Its pathway is porphyrin-containing compound metabolism; protoporphyrin-IX biosynthesis; 5-aminolevulinate from L-glutamyl-tRNA(Glu): step 1/2. Catalyzes the NADPH-dependent reduction of glutamyl-tRNA(Glu) to glutamate 1-semialdehyde (GSA). This Geobacter metallireducens (strain ATCC 53774 / DSM 7210 / GS-15) protein is Glutamyl-tRNA reductase.